A 468-amino-acid polypeptide reads, in one-letter code: Pancreatic lipase-related protein 2 (468 aa).

An N-terminal signal peptide occupies residues 1 to 16; it reads MLLCWIVSLLLATVGG. A disulfide bridge links Cys20 with Cys26. Residues 92-104 are required for galactolipase activity; that stretch reads VHGFIDKGEDGWL. Cys108 and Cys119 form a disulfide bridge. Ser170 serves as the catalytic Nucleophile. The active-site Charge relay system is the Asp194. Ca(2+) contacts are provided by Glu205, Arg208, Asp210, and Asp213. Cysteines 255 and 279 form a disulfide. The segment at 256 to 278 is required for galactolipase activity; it reads QKNILSTIVDINGIWEGTQNFVA. Residue His281 is the Charge relay system of the active site. Intrachain disulfides connect Cys303–Cys314 and Cys317–Cys322. N-linked (GlcNAc...) asparagine glycosylation is found at Asn352 and Asn427. The 113-residue stretch at 356 to 468 folds into the PLAT domain; it reads WRYKVSVTLS…EDVLQSLYPC (113 aa). Cys452 and Cys468 are joined by a disulfide.

This sequence belongs to the AB hydrolase superfamily. Lipase family. As to expression, expressed in pancreatic acinar cells (at protein level).

It is found in the secreted. It localises to the zymogen granule membrane. The protein localises to the cell projection. Its subcellular location is the neuron projection. It carries out the reaction a triacylglycerol + H2O = a diacylglycerol + a fatty acid + H(+). The enzyme catalyses a 1,2-diacyl-3-O-(beta-D-galactosyl)-sn-glycerol + 2 H2O = 3-beta-D-galactosyl-sn-glycerol + 2 a fatty acid + 2 H(+). It catalyses the reaction 1,2,3-tri-(9Z-octadecenoyl)-glycerol + H2O = di-(9Z)-octadecenoylglycerol + (9Z)-octadecenoate + H(+). The catalysed reaction is di-(9Z)-octadecenoylglycerol + H2O = (9Z-octadecenoyl)-glycerol + (9Z)-octadecenoate + H(+). It carries out the reaction (9Z-octadecenoyl)-glycerol + H2O = glycerol + (9Z)-octadecenoate + H(+). The enzyme catalyses 1-(9Z-octadecenoyl)-glycerol + H2O = glycerol + (9Z)-octadecenoate + H(+). It catalyses the reaction 1,2,3-tripropanoylglycerol + H2O = dipropanoylglycerol + propanoate + H(+). The catalysed reaction is 1,2,3-tributanoylglycerol + H2O = dibutanoylglycerol + butanoate + H(+). It carries out the reaction 1,2,3-trioctanoylglycerol + H2O = dioctanoylglycerol + octanoate + H(+). The enzyme catalyses 1,2-didecanoylglycerol + H2O = decanoylglycerol + decanoate + H(+). It catalyses the reaction long chain 1,2-diacyl-3-O-beta-D-galactosyl-sn-glycerol + H2O = long chain acyl-3-O-beta-D-galactosyl-sn-glycerol + a fatty acid + H(+). The catalysed reaction is 1,2-dioctanoyl-3-O-beta-D-galactosyl-sn-glycerol + H2O = octanoyl-3-(beta-D-galactosyl)-sn-glycerol + octanoate + H(+). It carries out the reaction 1,2-didodecanoyl-3-beta-D-galactosyl-sn-glycerol + H2O = dodecanoyl-3-beta-D-galactosyl-sn-glycerol + dodecanoate + H(+). The enzyme catalyses 1-beta-D-galactosyl-2,3-didodecanoyl-sn-glycerol + H2O = 1-beta-D-galactosyl-dodecanoyl-sn-glycerol + dodecanoate + H(+). It catalyses the reaction a 1,2-diacyl-3-O-[alpha-D-galactosyl-(1-&gt;6)-beta-D-galactosyl]-sn-glycerol + H2O = acyl-3-O-[alpha-D-galactosyl-(1-&gt;6)-beta-D-galactosyl]-sn-glycerol + a fatty acid + H(+). The catalysed reaction is long chain 1,2-diacyl-3-O-[alpha-D-galactosyl-(1-&gt;6)-beta-D-galactosyl]-sn-glycerol + H2O = long chain acyl-3-O-[alpha-D-galactosyl-(1-&gt;6)-beta-D-galactosyl]-sn-glycerol + a fatty acid + H(+). It carries out the reaction 1,2-dioctanoyl-3-O-[alpha-D-galactosyl-(1-&gt;6)-beta-D-galactosyl]-sn-glycerol + H2O = octanoyl-3-O-[alpha-D-galactosyl-(1-&gt;6)-beta-D-galactosyl]-sn-glycerol + octanoate + H(+). The enzyme catalyses 1,2-didodecanoyl-3-O-[alpha-D-galactosyl-(1-&gt;6)-beta-D-galactosyl]-sn-glycerol + H2O = dodecanoyl-3-O-[alpha-D-galactosyl-(1-&gt;6)-beta-D-galactosyl]-sn-glycerol + dodecanoate + H(+). It catalyses the reaction a 1,2-diacyl-sn-glycero-3-phosphocholine + H2O = a monoacyl-sn-glycero-3-phosphocholine + a fatty acid + H(+). It participates in glycerolipid metabolism; triacylglycerol degradation. It functions in the pathway glycolipid metabolism. Its activity is regulated as follows. CLPS stimulates triacylglycerol lipase activity. Triacylglycerol lipase activity is not inhibited by increasing bile salt concentration. Lipase that primarily hydrolyzes triglycerides and galactosylglycerides. In neonates, may play a major role in pancreatic digestion of dietary fats such as milk fat globules enriched in long-chain triglycerides. Hydrolyzes short-, medium- and long-chain fatty acyls in triglycerides without apparent positional specificity. Can completely deacylate triacylglycerols. When the liver matures and bile salt synthesis increases, likely functions mainly as a galactolipase and monoacylglycerol lipase. Hydrolyzes monogalactosyldiglycerols (MGDG) and digalactosyldiacylglycerols (DGDG) present in a plant-based diet, releasing long-chain polyunsaturated fatty acids. Hydrolyzes medium- and long-chain fatty acyls in galactolipids. May act together with LIPF to hydrolyze partially digested triglycerides. Hydrolyzes long-chain monoglycerides with high efficiency. In cytotoxic T cells, contributes to perforin-dependent cell lysis, but is unlikely to mediate direct cytotoxicity. Also has low phospholipase activity. In neurons, required for the localization of the phospholipid 1-oleoyl-2-palmitoyl-PC (OPPC) to neurite tips through acyl chain remodeling of membrane phospholipids. The resulting OPPC-rich lipid membrane domain recruits the t-SNARE protein STX4 by selectively interacting with the STX4 transmembrane domain and this promotes surface expression of the dopamine transporter SLC6A3/DAT at neurite tips by facilitating fusion of SLC6A3-containing transport vesicles with the plasma membrane. The sequence is that of Pancreatic lipase-related protein 2 from Rattus norvegicus (Rat).